A 70-amino-acid polypeptide reads, in one-letter code: Dermaseptin-H3 (70 aa).

Positions 1–22 (MAFLKKSLFLVLFLGMVSLSIC) are cleaved as a signal peptide. Residues 23–43 (EEEKRENEDEELQEDDEQSEM) constitute a propeptide that is removed on maturation. Residues 25-44 (EKRENEDEELQEDDEQSEMK) form a disordered region. Positions 30 to 40 (EDEELQEDDEQ) are enriched in acidic residues. Position 70 is a leucine amide (Leu70).

Expressed by the skin glands.

It localises to the secreted. Functionally, has antibacterial activity against the Gram-negative bacteria E.coli and P.aeruginosa, and the Gram-positive bacteria S.aureus and M.luteus. Has antiprotozoal activity against L.amazonensis. No hemolytic activity. This chain is Dermaseptin-H3, found in Pithecopus hypochondrialis (Orange-legged leaf frog).